The following is a 392-amino-acid chain: CD2 homolog (392 aa).

An N-terminal signal peptide occupies residues 1–16 (MIIKLIFLICFKIVLS). Residues 17–222 (IDNKTKFNET…YLDFFQVTSY (206 aa)) lie on the Extracellular side of the membrane. 10 N-linked (GlcNAc...) asparagine; by host glycosylation sites follow: asparagine 39, asparagine 88, asparagine 92, asparagine 106, asparagine 148, asparagine 159, asparagine 183, asparagine 191, asparagine 198, and asparagine 204. 2 disulfides stabilise this stretch: cysteine 137-cysteine 205 and cysteine 144-cysteine 188. Residues 223-243 (IFYMIIFIVTGITVSILISII) form a helical membrane-spanning segment. Residues 244-392 (TFLFIRKRKH…ISLIHVDRII (149 aa)) lie on the Cytoplasmic side of the membrane. The segment at 258-290 (ESPPPESNEEEQQCHHDTTSIHEPSPREPLLPK) is disordered. Over residues 269–283 (QQCHHDTTSIHEPSP) the composition is skewed to basic and acidic residues. A run of 5 repeats spans residues 319-324 (KPCPPP), 325-330 (KPCPPP), 331-336 (KPCPPP), 337-342 (KPCPPS), and 343-348 (KPCPPP). Residues 319-348 (KPCPPPKPCPPPKPCPPPKPCPPSKPCPPP) are 5 X 6 AA tandem repeats of K-P-C-[PRS]-[P]-[PS]. Residues 328-357 (PPPKPCPPPKPCPPSKPCPPPEPYSPPKPC) form a disordered region.

It belongs to the asfivirus CD2 homolog protein family. Both glycosylated and nonglycosylated forms interact (via C-terminus) with the host AP-1 complex. Post-translationally, cleaved into two fragments of 63 kDa and 26 kDa containing respectively the glycosylated N-terminus and the nonglycosylated C-terminus. A full-length 89-kDa glycosylated form also exists.

The protein resides in the host cell membrane. The protein localises to the virion membrane. It localises to the host Golgi apparatus. Its function is as follows. May play an immunosuppressive role by inhibiting lymphocyte proliferation and subsequently facilitating viral replication and generalization of infection. Responsible for viral hemadsorption, which may help viral spread. Increases virus replication in the tick vector at the step of virus uptake or replication in the tick gut. May play a role in the host Golgi reorganization to yield viral factories. May play a role in host cell penetration. The sequence is that of CD2 homolog from Ornithodoros (relapsing fever ticks).